The chain runs to 472 residues: L-fuculokinase (472 aa).

It belongs to the FGGY kinase family. A divalent metal cation serves as cofactor.

It carries out the reaction L-fuculose + ATP = L-fuculose 1-phosphate + ADP + H(+). Its pathway is carbohydrate degradation; L-fucose degradation; L-lactaldehyde and glycerone phosphate from L-fucose: step 2/3. Its function is as follows. Catalyzes the phosphorylation of L-fuculose. In Escherichia coli O157:H7, this protein is L-fuculokinase.